A 211-amino-acid polypeptide reads, in one-letter code: Mediator of RNA polymerase II transcription subunit 18 (211 aa).

This sequence belongs to the Mediator complex subunit 18 family. In terms of assembly, component of the Mediator complex.

Its subcellular location is the nucleus. Its function is as follows. Component of the Mediator complex, a coactivator involved in the regulated transcription of nearly all RNA polymerase II-dependent genes. Mediator functions as a bridge to convey information from gene-specific regulatory proteins to the basal RNA polymerase II transcription machinery. Mediator is recruited to promoters by direct interactions with regulatory proteins and serves as a scaffold for the assembly of a functional preinitiation complex with RNA polymerase II and the general transcription factors. The protein is Mediator of RNA polymerase II transcription subunit 18 (MED18) of Anopheles gambiae (African malaria mosquito).